The following is a 344-amino-acid chain: MTNMMKALVKAKPEEGLWMERVPLPEIGPNDVLIKVRKAAICGTDVHIWNWDEWARKTVPVPLVTGHEFVGEVVDVGSAVTEYRIGQRVSGEGHIVCGHCRNCRAGRGHLCRNTLGVGVHRPGAFAEYISLPQHNVVAIPDDVPDEIAAIFDPLGNAVHTALSFDLVGEDVLVTGAGPIGIMGALVAQCVGARKVVITDINPGRLALAKKLGVRHVVNAREEKLTDVMRKLGMTEGFDVGLEMSGSASAFRDMIDVMNNGGKIAILGIAPTGFEIDWNKVIFKMLHLKGIYGREMFETWYKMIALVQGPLDISGLITHRISADDYREGFAAMRSGEAGKVVMDW.

C42 serves as a coordination point for Zn(2+). Residues T44 and H47 each act as charge relay system in the active site. Zn(2+) is bound by residues H67, E68, C97, C100, C103, and C111. Residues I179, D199, R204, 266–268 (LGI), and 290–291 (IY) each bind NAD(+).

Belongs to the zinc-containing alcohol dehydrogenase family. In terms of assembly, homotetramer. Zn(2+) serves as cofactor.

It localises to the cytoplasm. The catalysed reaction is L-threonine + NAD(+) = (2S)-2-amino-3-oxobutanoate + NADH + H(+). The protein operates within amino-acid degradation; L-threonine degradation via oxydo-reductase pathway; glycine from L-threonine: step 1/2. Catalyzes the NAD(+)-dependent oxidation of L-threonine to 2-amino-3-ketobutyrate. The sequence is that of L-threonine 3-dehydrogenase from Chelativorans sp. (strain BNC1).